A 424-amino-acid polypeptide reads, in one-letter code: MNLFASASTVAICSYALLSTVYKTAQVFYTLPTNVPPTSGDPPSGEPWPSVDVIIPCYNEAPRTLSDCLASIASQDYAGKLQVYVVDDGSANRDALVGVHEEYAGDPRFNFVALPKNVGKRKAQIAAIRRSCGDLVLNVDSDTILAPDVITRLALKMQDQAVGAAMGQLAASNRSETWLTRLIDMEYWLACNEERAAQARFGAVMCCCGPCAMYRRSALVSLLDQYETQRFRGKPSDFGEDRHLTILMLKAGFRTEYVPEAVAATVVPNSMGPYLRQQLRWARSTFRDTLLAFQLLRGLNIYLTLDVIGQNIGPLLLSLSILAGLAQFVTTGTVPWTACLMIAAMTIVRCSVAAFRARQLRFLGFSLHTLINIFLLLPLKAYALCTLSNSDWLSRSSAANVQDTGDALPKPNLVGSDAAYSEQQ.

It belongs to the NodC/HAS family.

The protein resides in the cell membrane. Involved in the synthesis of Nod factor, a sulfated N-acyl-beta-1,4-tetrasaccharide of N-acetylglucosamine which initiates a series of events in the host plant species leading eventually to nodulation. The polypeptide is N-acetylglucosaminyltransferase (nodC) (Mesorhizobium japonicum (strain LMG 29417 / CECT 9101 / MAFF 303099) (Mesorhizobium loti (strain MAFF 303099))).